The primary structure comprises 640 residues: Phosphatidylinositol-binding clathrin assembly protein (640 aa).

An N-acetylserine modification is found at Ser2. The ENTH domain maps to 14 to 145 (QHSVTGSAVS…VSYRQVAFDF (132 aa)). 2 positions are modified to phosphoserine: Ser16 and Ser20. The tract at residues 221–294 (KYFDMKKNQC…LEGKKIKDST (74 aa)) is interaction with PIMREG. Residue Lys238 forms a Glycyl lysine isopeptide (Lys-Gly) (interchain with G-Cter in SUMO2) linkage. Ser303 and Ser315 each carry phosphoserine. Residues 543–568 (NGTTKNDVSCSQPGEKKLTGGSNWQP) form a disordered region. Polar residues predominate over residues 544 to 554 (GTTKNDVSCSQ).

It belongs to the PICALM/SNAP91 family. In terms of assembly, binds to clathrin; involves primarily the C-terminal sequences, but the full-length protein is required for full binding capacity. Binds phosphatidylinositol 4,5- bisphosphate. Interacts with PIMREG; this interaction may change the subcellular location into the nucleus. Interacts with AP2A1 (via its alpha-appendage domain). Interacts (via N-terminus) with VAMP2; VAMP3; VAMP7 and VAMP8 (Via N-terminus). Interacts with LC3/MAP1LC3A. As to expression, isoform 2 was found in most tissues examined. Isoform 1 has an overlapping expression pattern but is absent from lung, heart and pancreas. Both isoforms are widely expressed in the brain, higher levels are seen in hippocampus, dentate gyrus, medial habenula nucleus and cerebellar granule cells.

The protein localises to the cell membrane. It localises to the membrane. It is found in the clathrin-coated pit. The protein resides in the golgi apparatus. Its subcellular location is the cytoplasmic vesicle. The protein localises to the clathrin-coated vesicle. It localises to the nucleus. Cytoplasmic adapter protein that plays a critical role in clathrin-mediated endocytosis which is important in processes such as internalization of cell receptors, synaptic transmission or removal of apoptotic cells. Recruits AP-2 and attaches clathrin triskelions to the cytoplasmic side of plasma membrane leading to clathrin-coated vesicles (CCVs) assembly. Furthermore, regulates clathrin-coated vesicle size and maturation by directly sensing and driving membrane curvature. In addition to binding to clathrin, mediates the endocytosis of small R-SNARES (Soluble NSF Attachment Protein REceptors) between plasma membranes and endosomes including VAMP2, VAMP3, VAMP4, VAMP7 or VAMP8. In turn, PICALM-dependent SNARE endocytosis is required for the formation and maturation of autophagic precursors. Modulates thereby autophagy and the turnover of autophagy substrates such as MAPT/TAU or amyloid precursor protein cleaved C-terminal fragment (APP-CTF). The chain is Phosphatidylinositol-binding clathrin assembly protein (Picalm) from Rattus norvegicus (Rat).